Consider the following 197-residue polypeptide: MAVHKVSFVAHLLVLGMFLLLVDAKACTKECGNFAYGICPRSQGTPDDPICTTCCAGYKGCNYYSANGTFICEGSSDPKNPNVCPQFCDPDIAYSKCPRSEGETIINPTGCTTCCTGYKGCYYFGQDGEFVCEGESDEPKSCTTECDPRVATISCPFSGLVKINQECINCCNADKGCELYDNDGSLICTGGEPQSAA.

An N-terminal signal peptide occupies residues 1 to 24; the sequence is MAVHKVSFVAHLLVLGMFLLLVDA. 3 consecutive repeat copies span residues 24–80, 81–140, and 141–196. Intrachain disulfides connect cysteine 27–cysteine 115, cysteine 31–cysteine 111, cysteine 39–cysteine 121, cysteine 51–cysteine 88, cysteine 54–cysteine 72, cysteine 55–cysteine 84, cysteine 61–cysteine 97, and cysteine 114–cysteine 132.

This sequence belongs to the protease inhibitor I20 (potato type II proteinase inhibitor) family.

The chain is Proteinase inhibitor type-2 from Nicotiana tabacum (Common tobacco).